A 129-amino-acid chain; its full sequence is Small ribosomal subunit protein uS12 (129 aa).

The residue at position 89 (D89) is a 3-methylthioaspartic acid. The segment at 101–129 (TLDTSGVSDRKQSRSKYGAKQPKAVAAKK) is disordered.

Belongs to the universal ribosomal protein uS12 family. In terms of assembly, part of the 30S ribosomal subunit. Contacts proteins S8 and S17. May interact with IF1 in the 30S initiation complex.

Functionally, with S4 and S5 plays an important role in translational accuracy. In terms of biological role, interacts with and stabilizes bases of the 16S rRNA that are involved in tRNA selection in the A site and with the mRNA backbone. Located at the interface of the 30S and 50S subunits, it traverses the body of the 30S subunit contacting proteins on the other side and probably holding the rRNA structure together. The combined cluster of proteins S8, S12 and S17 appears to hold together the shoulder and platform of the 30S subunit. The sequence is that of Small ribosomal subunit protein uS12 from Chlorobium luteolum (strain DSM 273 / BCRC 81028 / 2530) (Pelodictyon luteolum).